The chain runs to 204 residues: Superoxide dismutase [Mn] (204 aa).

Mn(2+) contacts are provided by His29, His84, Asp167, and His171.

This sequence belongs to the iron/manganese superoxide dismutase family. As to quaternary structure, homotetramer. Mn(2+) serves as cofactor.

The catalysed reaction is 2 superoxide + 2 H(+) = H2O2 + O2. Functionally, destroys superoxide anion radicals which are normally produced within the cells and which are toxic to biological systems. This Thermus thermophilus (strain ATCC BAA-163 / DSM 7039 / HB27) protein is Superoxide dismutase [Mn] (sodA).